Consider the following 281-residue polypeptide: MANLKALLLRIKSVKSIQKTTKVMQMISAAKLHRVQQKLENAKKHLLELSSIVDYVPSDGVHNCASIAKKERVLLVVMSSDRGLCGNFNNLIVKFTKSYVEKLESSNKEVKLIFFGKKAYDMMYSQYSDKILNVFSNTKSITDFLYFKLFVYNSGIDFDQFDNVMILFNKFYTTILQKPDAQQLIPCNLGIPMLLKEVYQYEPTYVDVLSTISLGYVLNLMYIAFLENSASEHCSRMVAMESANRNTKDMLNRLALEYNRSRQASITTDLIEIISGFESLN.

The protein belongs to the ATPase gamma chain family. F-type ATPases have 2 components, CF(1) - the catalytic core - and CF(0) - the membrane proton channel. CF(1) has five subunits: alpha(3), beta(3), gamma(1), delta(1), epsilon(1). CF(0) has three main subunits: a, b and c.

It is found in the cell inner membrane. Produces ATP from ADP in the presence of a proton gradient across the membrane. The gamma chain is believed to be important in regulating ATPase activity and the flow of protons through the CF(0) complex. The protein is ATP synthase gamma chain of Ehrlichia chaffeensis (strain ATCC CRL-10679 / Arkansas).